A 335-amino-acid chain; its full sequence is 4-hydroxy-3-methylbut-2-enyl diphosphate reductase 2 (335 aa).

Cys37 contributes to the [4Fe-4S] cluster binding site. Residues His66 and His99 each contribute to the (2E)-4-hydroxy-3-methylbut-2-enyl diphosphate site. The dimethylallyl diphosphate site is built by His66 and His99. The isopentenyl diphosphate site is built by His66 and His99. Cys121 lines the [4Fe-4S] cluster pocket. Residue His149 participates in (2E)-4-hydroxy-3-methylbut-2-enyl diphosphate binding. His149 is a dimethylallyl diphosphate binding site. An isopentenyl diphosphate-binding site is contributed by His149. Glu151 serves as the catalytic Proton donor. Thr189 is a binding site for (2E)-4-hydroxy-3-methylbut-2-enyl diphosphate. [4Fe-4S] cluster is bound at residue Cys219. Residues Ser247, Ser248, Asn249, and Ser292 each coordinate (2E)-4-hydroxy-3-methylbut-2-enyl diphosphate. Ser247, Ser248, Asn249, and Ser292 together coordinate dimethylallyl diphosphate. Isopentenyl diphosphate-binding residues include Ser247, Ser248, Asn249, and Ser292.

Belongs to the IspH family. Requires [4Fe-4S] cluster as cofactor.

It carries out the reaction isopentenyl diphosphate + 2 oxidized [2Fe-2S]-[ferredoxin] + H2O = (2E)-4-hydroxy-3-methylbut-2-enyl diphosphate + 2 reduced [2Fe-2S]-[ferredoxin] + 2 H(+). The enzyme catalyses dimethylallyl diphosphate + 2 oxidized [2Fe-2S]-[ferredoxin] + H2O = (2E)-4-hydroxy-3-methylbut-2-enyl diphosphate + 2 reduced [2Fe-2S]-[ferredoxin] + 2 H(+). It functions in the pathway isoprenoid biosynthesis; dimethylallyl diphosphate biosynthesis; dimethylallyl diphosphate from (2E)-4-hydroxy-3-methylbutenyl diphosphate: step 1/1. The protein operates within isoprenoid biosynthesis; isopentenyl diphosphate biosynthesis via DXP pathway; isopentenyl diphosphate from 1-deoxy-D-xylulose 5-phosphate: step 6/6. Catalyzes the conversion of 1-hydroxy-2-methyl-2-(E)-butenyl 4-diphosphate (HMBPP) into a mixture of isopentenyl diphosphate (IPP) and dimethylallyl diphosphate (DMAPP). Acts in the terminal step of the DOXP/MEP pathway for isoprenoid precursor biosynthesis. Has a higher activity compared with LytB2. Is essential for M.tuberculosis growth in vitro. The chain is 4-hydroxy-3-methylbut-2-enyl diphosphate reductase 2 from Mycobacterium tuberculosis (strain ATCC 25618 / H37Rv).